We begin with the raw amino-acid sequence, 271 residues long: Acyl-[acyl-carrier-protein]--UDP-N-acetylglucosamine O-acyltransferase (271 aa).

This sequence belongs to the transferase hexapeptide repeat family. LpxA subfamily. Homotrimer.

Its subcellular location is the cytoplasm. The enzyme catalyses a (3R)-hydroxyacyl-[ACP] + UDP-N-acetyl-alpha-D-glucosamine = a UDP-3-O-[(3R)-3-hydroxyacyl]-N-acetyl-alpha-D-glucosamine + holo-[ACP]. Its pathway is glycolipid biosynthesis; lipid IV(A) biosynthesis; lipid IV(A) from (3R)-3-hydroxytetradecanoyl-[acyl-carrier-protein] and UDP-N-acetyl-alpha-D-glucosamine: step 1/6. In terms of biological role, involved in the biosynthesis of lipid A, a phosphorylated glycolipid that anchors the lipopolysaccharide to the outer membrane of the cell. The protein is Acyl-[acyl-carrier-protein]--UDP-N-acetylglucosamine O-acyltransferase of Ralstonia nicotianae (strain ATCC BAA-1114 / GMI1000) (Ralstonia solanacearum).